Consider the following 584-residue polypeptide: Delta 8-(E)-sphingolipid desaturase (584 aa).

The region spanning 7 to 82 is the Cytochrome b5 heme-binding domain; the sequence is KKIFTRSQII…FTRFKIGEIE (76 aa). Heme-binding residues include His42 and His65. Residues 109 to 134 form a disordered region; the sequence is NKNTSNKKTLDSKLDNDSSNSTSDLE. Residues 261–281 form a helical membrane-spanning segment; that stretch reads LFLYSLSFLKINQLFLSAVFM. Positions 293–297 match the Histidine box-1 motif; that stretch reads HDAGH. The helical transmembrane segment at 306–326 threads the bilayer; sequence IDNIFGMLIADWFGGLSLGWW. The Histidine box-2 signature appears at 330-334; sequence HNVHH. The next 3 helical transmembrane spans lie at 386–403, 423–443, and 455–475; these read YLYY…YRLS, YFEF…LVFK, and VMVS…SHFA. Residues 514–518 carry the Histidine box-3 motif; it reads QAIHH.

This sequence belongs to the fatty acid desaturase type 1 family.

It localises to the membrane. It carries out the reaction an N-acylsphing-4-enine + 2 Fe(II)-[cytochrome b5] + O2 + 2 H(+) = a (4E,8E)-4-sphinga-4,8-dienine ceramide + 2 Fe(III)-[cytochrome b5] + 2 H2O. Its pathway is lipid metabolism; sphingolipid metabolism. Delta(8)-fatty-acid desaturase which introduces a double bond at the 8-position in the long-chain base (LCB) of ceramides. Required for the formation of the di-unsaturated sphingoid base (E,E)-sphinga-4,8-dienine during glucosylceramide (GluCer) biosynthesis. The sequence is that of Delta 8-(E)-sphingolipid desaturase from Candida albicans (strain SC5314 / ATCC MYA-2876) (Yeast).